A 244-amino-acid polypeptide reads, in one-letter code: Globin-like protein 9 (244 aa).

The tract at residues 1–38 (MRRMAKYDRSYSMQDAHGPNGLARRGTQRGCSRSKSTR) is disordered. The Globin domain occupies 47 to 200 (SLTFSQKQAL…LIDELRGGFE (154 aa)). Heme contacts are provided by His-111 and His-143.

It belongs to the globin family.

In Caenorhabditis briggsae, this protein is Globin-like protein 9.